A 210-amino-acid polypeptide reads, in one-letter code: MTGLFITLEGPEGAGKSTNREYLAERLRAAGIEVVLTREPGGTPLAERIREVLLAPVDEVMNPDTELLLVFAARAQHLAEVIRPALARGAVVLCDRFTDSTYAYQGGGRGLSLERIAALETFVQGDLRPDLTLIFDLPVEIGLARASARGRLDRFELEGREFFEAVRNAFLKRAEDDPARYVRIDAGQPLVKVQQSLDTLIPNLLELSRG.

10–17 provides a ligand contact to ATP; the sequence is GPEGAGKS.

Belongs to the thymidylate kinase family.

The catalysed reaction is dTMP + ATP = dTDP + ADP. Its function is as follows. Phosphorylation of dTMP to form dTDP in both de novo and salvage pathways of dTTP synthesis. This Pseudomonas fluorescens (strain Pf0-1) protein is Thymidylate kinase.